A 200-amino-acid chain; its full sequence is Large ribosomal subunit protein uL4 (200 aa).

The disordered stretch occupies residues 43–72 (RAQKTRAEVSGSGKKPWRQKGTGRARSGDI).

It belongs to the universal ribosomal protein uL4 family. Part of the 50S ribosomal subunit.

One of the primary rRNA binding proteins, this protein initially binds near the 5'-end of the 23S rRNA. It is important during the early stages of 50S assembly. It makes multiple contacts with different domains of the 23S rRNA in the assembled 50S subunit and ribosome. Functionally, forms part of the polypeptide exit tunnel. The protein is Large ribosomal subunit protein uL4 of Haemophilus ducreyi (strain 35000HP / ATCC 700724).